The sequence spans 93 residues: Small ribosomal subunit protein uS19 (93 aa).

Belongs to the universal ribosomal protein uS19 family.

In terms of biological role, protein S19 forms a complex with S13 that binds strongly to the 16S ribosomal RNA. The chain is Small ribosomal subunit protein uS19 from Synechococcus sp. (strain JA-3-3Ab) (Cyanobacteria bacterium Yellowstone A-Prime).